The primary structure comprises 459 residues: MSNKAWGGRFSEQPEDWVDEFNASIHFDKTLIQYDVQGSIAHAKMLAKQDIITDSDCDQIIEGLNAILKDYEQDNLELDTSLEDIHLNIEHELIKRIGDAGGRLHTGRSRNDQVATDMHLYTKAEVNALIELITQFQHTIVNTAESHINTIMPGYTHLQRAQPISFAHHILTYYWMLERDKSRFQDSLKRIDISPLGAAALSGTTYPIDRHETQSLLDFSAIYENSMDAVSDRDYIVETLHNISLTMVHLSRFAEEIIFWSSAEANFITLSDAFSTGSSIMPQKKNPDMAELIRGKVGRTTGHLMSMLMTLKGLPLAYNKDMQEDKEGLFDAVHTLKGSLRIFDGMIDSMTVNVERLQQTVYNDFSNATELADYLVNKGVPFRSAHEVVGKIVLWSIQHNIYLLDVPLEQYQSANELIEADIYDYLKPENCVSRRISYGSTGQSSVQQQLDIIHKELSD.

This sequence belongs to the lyase 1 family. Argininosuccinate lyase subfamily.

It is found in the cytoplasm. The enzyme catalyses 2-(N(omega)-L-arginino)succinate = fumarate + L-arginine. It participates in amino-acid biosynthesis; L-arginine biosynthesis; L-arginine from L-ornithine and carbamoyl phosphate: step 3/3. In Staphylococcus saprophyticus subsp. saprophyticus (strain ATCC 15305 / DSM 20229 / NCIMB 8711 / NCTC 7292 / S-41), this protein is Argininosuccinate lyase.